The following is a 394-amino-acid chain: Imidazolonepropionase (394 aa).

Fe(3+) is bound by residues H61 and H63. Zn(2+) contacts are provided by H61 and H63. Positions 70, 133, and 164 each coordinate 4-imidazolone-5-propanoate. Y133 is a binding site for N-formimidoyl-L-glutamate. A Fe(3+)-binding site is contributed by H225. H225 serves as a coordination point for Zn(2+). E228 contributes to the 4-imidazolone-5-propanoate binding site. D299 serves as a coordination point for Fe(3+). Residue D299 coordinates Zn(2+).

The protein belongs to the metallo-dependent hydrolases superfamily. HutI family. Zn(2+) serves as cofactor. It depends on Fe(3+) as a cofactor.

The protein localises to the cytoplasm. It catalyses the reaction 4-imidazolone-5-propanoate + H2O = N-formimidoyl-L-glutamate. The protein operates within amino-acid degradation; L-histidine degradation into L-glutamate; N-formimidoyl-L-glutamate from L-histidine: step 3/3. In terms of biological role, catalyzes the hydrolytic cleavage of the carbon-nitrogen bond in imidazolone-5-propanoate to yield N-formimidoyl-L-glutamate. It is the third step in the universal histidine degradation pathway. The polypeptide is Imidazolonepropionase (Picrophilus torridus (strain ATCC 700027 / DSM 9790 / JCM 10055 / NBRC 100828 / KAW 2/3)).